The sequence spans 380 residues: Putative 8-amino-7-oxononanoate synthase (380 aa).

Arginine 22 is a binding site for substrate. 109-110 (GY) serves as a coordination point for pyridoxal 5'-phosphate. Residue histidine 134 coordinates substrate. Pyridoxal 5'-phosphate contacts are provided by residues serine 182, 207–210 (DEAH), and 238–241 (TLSK). Lysine 241 carries the N6-(pyridoxal phosphate)lysine modification. Threonine 353 lines the substrate pocket.

It belongs to the class-II pyridoxal-phosphate-dependent aminotransferase family. BioF subfamily. In terms of assembly, homodimer. Pyridoxal 5'-phosphate is required as a cofactor.

It catalyses the reaction 6-carboxyhexanoyl-[ACP] + L-alanine + H(+) = (8S)-8-amino-7-oxononanoate + holo-[ACP] + CO2. Its pathway is cofactor biosynthesis; biotin biosynthesis. Catalyzes the decarboxylative condensation of pimeloyl-[acyl-carrier protein] and L-alanine to produce 8-amino-7-oxononanoate (AON), [acyl-carrier protein], and carbon dioxide. In Gloeothece citriformis (strain PCC 7424) (Cyanothece sp. (strain PCC 7424)), this protein is Putative 8-amino-7-oxononanoate synthase (bioF).